The chain runs to 192 residues: Peptidyl-tRNA hydrolase (192 aa).

Catalysis depends on H19, which acts as the Proton acceptor. Residues Y64, N66, and N112 each coordinate tRNA.

It belongs to the PTH family. Monomer.

The protein localises to the cytoplasm. The catalysed reaction is an N-acyl-L-alpha-aminoacyl-tRNA + H2O = an N-acyl-L-amino acid + a tRNA + H(+). Hydrolyzes ribosome-free peptidyl-tRNAs (with 1 or more amino acids incorporated), which drop off the ribosome during protein synthesis, or as a result of ribosome stalling. Its function is as follows. Catalyzes the release of premature peptidyl moieties from peptidyl-tRNA molecules trapped in stalled 50S ribosomal subunits, and thus maintains levels of free tRNAs and 50S ribosomes. This Acidiphilium cryptum (strain JF-5) protein is Peptidyl-tRNA hydrolase.